A 161-amino-acid polypeptide reads, in one-letter code: Transcriptional repressor NrdR (161 aa).

The segment at 1–23 (MRCPFCGHPDTQVKDSRPAEDGN) is disordered. Residues 3-34 (CPFCGHPDTQVKDSRPAEDGNAIRRRRQCPSC) fold into a zinc finger. The segment covering 11-23 (TQVKDSRPAEDGN) has biased composition (basic and acidic residues). An ATP-cone domain is found at 49-139 (LTVMKKSGRR…VYKDFHKVED (91 aa)).

Belongs to the NrdR family. Zn(2+) is required as a cofactor.

In terms of biological role, negatively regulates transcription of bacterial ribonucleotide reductase nrd genes and operons by binding to NrdR-boxes. This Maricaulis maris (strain MCS10) (Caulobacter maris) protein is Transcriptional repressor NrdR.